The chain runs to 185 residues: Elongation factor P (185 aa).

Belongs to the elongation factor P family.

It localises to the cytoplasm. The protein operates within protein biosynthesis; polypeptide chain elongation. Involved in peptide bond synthesis. Stimulates efficient translation and peptide-bond synthesis on native or reconstituted 70S ribosomes in vitro. Probably functions indirectly by altering the affinity of the ribosome for aminoacyl-tRNA, thus increasing their reactivity as acceptors for peptidyl transferase. This chain is Elongation factor P, found in Streptococcus pyogenes serotype M4 (strain MGAS10750).